We begin with the raw amino-acid sequence, 958 residues long: Translation initiation factor IF-2 (958 aa).

Residues Phe-50 to Val-67 are compositionally biased toward low complexity. Disordered stretches follow at residues Phe-50 to Phe-224 and Glu-288 to Pro-374. Composition is skewed to basic and acidic residues over residues Ser-68–Lys-89, Ser-96–Pro-118, and Phe-138–Arg-153. Over residues Lys-157–Arg-169 the composition is skewed to low complexity. Basic and acidic residues-rich tracts occupy residues Arg-185–Lys-195 and Val-290–Arg-323. Positions Asn-337–Asn-346 are enriched in low complexity. The segment covering Val-365–Pro-374 has biased composition (basic and acidic residues). The 168-residue stretch at Glu-460–Glu-627 folds into the tr-type G domain. The tract at residues Gly-469 to Thr-476 is G1. Gly-469–Thr-476 contributes to the GTP binding site. The tract at residues Gly-494–His-498 is G2. The interval Asp-515 to Gly-518 is G3. GTP contacts are provided by residues Asp-515 to His-519 and Asn-569 to Asp-572. The G4 stretch occupies residues Asn-569–Asp-572. The segment at Ser-605–Lys-607 is G5.

This sequence belongs to the TRAFAC class translation factor GTPase superfamily. Classic translation factor GTPase family. IF-2 subfamily.

The protein resides in the cytoplasm. Its function is as follows. One of the essential components for the initiation of protein synthesis. Protects formylmethionyl-tRNA from spontaneous hydrolysis and promotes its binding to the 30S ribosomal subunits. Also involved in the hydrolysis of GTP during the formation of the 70S ribosomal complex. The polypeptide is Translation initiation factor IF-2 (Streptococcus pneumoniae serotype 4 (strain ATCC BAA-334 / TIGR4)).